The chain runs to 496 residues: DEAD-box ATP-dependent RNA helicase 38 (496 aa).

The interval 1–91 (MADTVEKVPT…SGDTPYTSAS (91 aa)) is disordered. An N-acetylalanine modification is found at alanine 2. Residues 7 to 25 (KVPTVVESSSSSTVEASNS) are compositionally biased toward low complexity. Residues 27–40 (EKTEPTTEKKKWGD) show a composition bias toward basic and acidic residues. Residues 41-51 (VEDDDDEEEAV) are compositionally biased toward acidic residues. Polar residues predominate over residues 78–91 (KAVTSGDTPYTSAS). A Q motif motif is present at residues 91 to 120 (SRFEDLNLSPELMKGLYVEMKFEKPSKIQA). Residues 125–301 (MIMTPPHKHL…ARTVKDPNQL (177 aa)) form the Helicase ATP-binding domain. Residue 138–145 (AHNGSGKT) coordinates ATP. Positions 245–248 (DEAD) match the DEAD box motif. Residues 329-483 (VIKDQIMELG…EIKSWNSEEE (155 aa)) enclose the Helicase C-terminal domain.

Belongs to the DEAD box helicase family. DDX19/DBP5 subfamily. In terms of assembly, interacts with NUP214 (via N-terminus). In terms of tissue distribution, constitutively expressed.

The protein localises to the cytoplasm. The protein resides in the nucleus. The enzyme catalyses ATP + H2O = ADP + phosphate + H(+). ATP-dependent RNA helicase essential for mRNA export from the nucleus. Plays an important role in the positive regulation of CBF/DREB transcription factors. The sequence is that of DEAD-box ATP-dependent RNA helicase 38 (RH38) from Arabidopsis thaliana (Mouse-ear cress).